A 180-amino-acid chain; its full sequence is ATP-dependent protease subunit HslV (180 aa).

Thr5 is an active-site residue. The Na(+) site is built by Gly161, Cys164, and Thr167.

Belongs to the peptidase T1B family. HslV subfamily. In terms of assembly, a double ring-shaped homohexamer of HslV is capped on each side by a ring-shaped HslU homohexamer. The assembly of the HslU/HslV complex is dependent on binding of ATP.

The protein resides in the cytoplasm. It carries out the reaction ATP-dependent cleavage of peptide bonds with broad specificity.. With respect to regulation, allosterically activated by HslU binding. In terms of biological role, protease subunit of a proteasome-like degradation complex believed to be a general protein degrading machinery. The sequence is that of ATP-dependent protease subunit HslV from Campylobacter jejuni subsp. jejuni serotype O:2 (strain ATCC 700819 / NCTC 11168).